The sequence spans 359 residues: 4-galactosyl-N-acetylglucosaminide 3-alpha-L-fucosyltransferase FUT6 (359 aa).

Topologically, residues 1–14 (MDPLGPAKTQWSWR) are cytoplasmic. A helical; Signal-anchor for type II membrane protein transmembrane segment spans residues 15–34 (CCLTALLFQLLVAVCFFSYL). Residues 35-359 (RVSRDDPTVY…QTRSIAAWFT (325 aa)) lie on the Lumenal side of the membrane. A determines site-specific fucosylation region spans residues 73-112 (KPIALPRCSEMVPGTADCNITADRKVYPQADAVIVHHREV). 3 N-linked (GlcNAc...) asparagine glycosylation sites follow: N91, N153, and N184.

Belongs to the glycosyltransferase 10 family. As to quaternary structure, homodimer and monomer. Monomer (secreted form). In terms of processing, N-glycosylated. Post-translationally, proteolytic cleavage releases a secreted glycoform of 43 kDa.

It is found in the golgi apparatus. The protein localises to the golgi stack membrane. It localises to the secreted. It catalyses the reaction a beta-D-galactosyl-(1-&gt;4)-N-acetyl-beta-D-glucosaminyl derivative + GDP-beta-L-fucose = a beta-D-galactosyl-(1-&gt;4)-[alpha-L-fucosyl-(1-&gt;3)]-N-acetyl-beta-D-glucosaminyl derivative + GDP + H(+). The enzyme catalyses an N-acetyl-alpha-neuraminyl-(2-&gt;3)-beta-D-galactosyl-(1-&gt;4)-N-acetyl-beta-D-glucosaminyl derivative + GDP-beta-L-fucose = an alpha-Neu5Ac-(2-&gt;3)-beta-D-Gal-(1-&gt;4)-[alpha-L-Fuc-(1-&gt;3)]-beta-D-GlcNAc derivative + GDP + H(+). It carries out the reaction an alpha-Neu5Ac-(2-&gt;3)-beta-D-Gal-(1-&gt;4)-beta-D-GlcNAc-(1-&gt;3)-beta-D-Gal-(1-&gt;4)-[alpha-L-Fuc-(1-&gt;3)]-beta-D-GlcNAc derivative + GDP-beta-L-fucose = an alpha-Neu5Ac-(2-&gt;3)-beta-D-Gal-(1-&gt;4)-[alpha-L-Fuc-(1-&gt;3)]-beta-D-GlcNAc-(1-&gt;3)-beta-D-Gal-(1-&gt;4)-[alpha-L-Fuc-(1-&gt;3)]-beta-D-GlcNAc derivative + GDP + H(+). The catalysed reaction is a neolactoside nLc6Cer + GDP-beta-L-fucose = beta-D-Gal-(1-&gt;4)-[alpha-L-Fuc-(1-&gt;3)]-beta-D-GlcNAc-(1-&gt;3)-beta-D-Gal-(1-&gt;4)-beta-D-GlcNAc-(1-&gt;3)-beta-D-Gal-(1-&gt;4)-beta-D-Glc-(1&lt;-&gt;1')-Cer + GDP + H(+). It catalyses the reaction a neolactoside nLc6Cer + GDP-beta-L-fucose = beta-D-galactosyl-(1-&gt;4)-N-acetyl-beta-D-glucosaminyl-(1-&gt;3)-beta-D-galactosyl-(1-&gt;4)-[alpha-L-fucosyl-(1-&gt;3)]-N-acetyl-beta-D-glucosaminyl-(1-&gt;3)-beta-D-galactosyl-(1-&gt;4)-beta-D-glucosyl-(1&lt;-&gt;1')-ceramide + GDP + H(+). The enzyme catalyses a neolactoside VI(3)-alpha-NeuNAc-nLc6Cer + GDP-beta-L-fucose = a neolactoside VI(3)-alpha-NeuAc,V(3)-alphaFuc-nLc6Cer + GDP + H(+). It carries out the reaction beta-D-galactosyl-(1-&gt;4)-N-acetyl-D-glucosamine + GDP-beta-L-fucose = beta-D-galactosyl-(1-&gt;4)-[alpha-L-fucosyl-(1-&gt;3)]-N-acetyl-D-glucosamine + GDP + H(+). The catalysed reaction is N-acetyl-alpha-neuraminosyl-(2-&gt;3)-beta-D-galactosyl-(1-&gt;4)-N-acetyl-beta-D-glucosamine + GDP-beta-L-fucose = N-acetyl-alpha-neuraminosyl-(2-&gt;3)-beta-D-galactosyl-(1-&gt;4)-[alpha-L-fucosyl-(1-&gt;3)]-N-acetyl-beta-D-glucosamine + GDP + H(+). It catalyses the reaction lactose + GDP-beta-L-fucose = beta-D-galactosyl-(1-&gt;4)-[alpha-L-fucosyl-(1-&gt;3)]-D-glucose + GDP + H(+). The enzyme catalyses alpha-L-Fuc-(1-&gt;2)-beta-D-Gal-(1-&gt;4)-D-Glc + GDP-beta-L-fucose = alpha-L-Fuc-(1-&gt;2)-beta-D-Gal-(1-&gt;4)-[alpha-L-Fuc-(1-&gt;3)]-D-Glc + GDP + H(+). It carries out the reaction a beta-D-galactosyl-(1-&gt;4)-N-acetyl-beta-D-6-sulfooxy-glucosaminyl derivative + GDP-beta-L-fucose = a beta-D-galactosyl-(1-&gt;4)-[alpha-L-fucosyl-(1-&gt;3)]-N-acetyl-beta-D-6-sulfooxy-glucosaminyl derivative + GDP + H(+). Its pathway is protein modification; protein glycosylation. Catalyzes the transfer of L-fucose, from a guanosine diphosphate-beta-L-fucose, to the N-acetyl glucosamine (GlcNAc) of a distal alpha2,3 sialylated lactosamine unit of a glycoprotein- or glycolipid-linked sialopolylactosamines chain or of a distal or internal lactosamine unit of a neutral glycoprotein- or glycolipid-linked polylactosamines chain through an alpha-1,3 glycosidic linkage and participates in surface expression of the sialyl Lewis X (sLe(x)), Lewis X (Le(x)) and non sialylated VIM2 determinants. Moreover transfers fucose to H-type 2 (Fucalpha1-2Galbeta1-4GlcNAc) chain acceptor substrates and participates in difucosylated sialyl Lewis x determinants. Also fucosylates a polylactosamine substrate having a 6 sulfate modification at the GlcNAc moiety and gives rise to sialyl and non-sialyl 6-sulfo lewis X. Does not have activity towards type 1 ((Galbeta1-3GlcNAc)) and H-type 1 chain (Fucalpha1-2Galbeta1-3GlcNAc) acceptors substrates. The protein is 4-galactosyl-N-acetylglucosaminide 3-alpha-L-fucosyltransferase FUT6 of Pongo pygmaeus (Bornean orangutan).